Here is a 577-residue protein sequence, read N- to C-terminus: Cleavage stimulation factor subunit 2 (577 aa).

Ser14 bears the Phosphoserine mark. An RRM domain is found at 16 to 94; sequence RSVFVGNIPY…RALRVDNAAS (79 aa). Residues 108 to 248 form an interactions with CSTF3 and SYMPK region; sequence APVIESPYGE…VNGAPPLMQA (141 aa). Lys189 is covalently cross-linked (Glycyl lysine isopeptide (Lys-Gly) (interchain with G-Cter in SUMO2)). The segment at 206-243 is disordered; it reads QPVHGAGPGSGSNVSMNQQNPQAPQAQSLGGMHVNGAP. A compositionally biased stretch (low complexity) spans 222 to 232; it reads NQQNPQAPQAQ. Omega-N-methylarginine is present on Arg308. Residues 340 to 409 form a disordered region; that stretch reads EVEPRGYLGP…DGRGGRDPRG (70 aa). The span at 360–373 shows a compositional bias: basic and acidic residues; the sequence is PGHESRGPPPHELR. Residues 410–414 form a 1; approximate repeat; sequence IDARG. The interval 410-469 is 12 X 5 AA tandem repeats of M-E-A-R-[AG]; sequence IDARGMEARAMEARGLDARGLEARAMEARAMEARAMEARAMEARAMEVRGMEARGMDTRG. 2 consecutive repeat copies span residues 415–419 and 420–424. The 4; approximate repeat unit spans residues 425–429; sequence LDARG. Residues 430–434 form a 5; approximate repeat; it reads LEARA. 4 repeat units span residues 435–439, 440–444, 445–449, and 450–454. The stretch at 455–459 is one 10; approximate repeat; it reads MEVRG. Copy 11 of the repeat occupies 460–464; that stretch reads MEARG. A 12; approximate repeat occupies 465–469; it reads MDTRG. Residues Arg468 and Arg475 each carry the omega-N-methylarginine modification. The tract at residues 508 to 532 is disordered; it reads GMQGASIQGGSQPGGFSPGQNQVTP. Positions 514 to 577 are interaction with RPO2TC1; it reads IQGGSQPGGF…EQIQKSTGAP (64 aa). Ser518 and Ser524 each carry phosphoserine.

As to quaternary structure, the CSTF complex is composed of CSTF1 (50 kDa subunit), CSTF2 (64 kDa subunit) and CSTF3 (77 kDa subunit). CSTF2 directly interacts with CSTF3, SYMPK and RPO2TC1. Interacts with HSF1 in heat-stressed cells. Interacts with CPSF2, CPSF3 and FIP1L1. Interacts with DDX1.

It localises to the nucleus. Its function is as follows. One of the multiple factors required for polyadenylation and 3'-end cleavage of mammalian pre-mRNAs. This subunit is directly involved in the binding to pre-mRNAs. The polypeptide is Cleavage stimulation factor subunit 2 (CSTF2) (Homo sapiens (Human)).